We begin with the raw amino-acid sequence, 156 residues long: Small ribosomal subunit protein uS7 (156 aa).

The protein belongs to the universal ribosomal protein uS7 family. As to quaternary structure, part of the 30S ribosomal subunit. Contacts proteins S9 and S11.

In terms of biological role, one of the primary rRNA binding proteins, it binds directly to 16S rRNA where it nucleates assembly of the head domain of the 30S subunit. Is located at the subunit interface close to the decoding center, probably blocks exit of the E-site tRNA. In Shewanella sp. (strain MR-7), this protein is Small ribosomal subunit protein uS7.